Consider the following 399-residue polypeptide: Succinate--CoA ligase [ADP-forming] subunit beta (399 aa).

The ATP-grasp domain occupies K9–E254. ATP contacts are provided by residues K46, G53–G55, E109, C112, and E117. Mg(2+) is bound by residues N209 and D223. Substrate is bound by residues N274 and G331–M333.

It belongs to the succinate/malate CoA ligase beta subunit family. As to quaternary structure, heterotetramer of two alpha and two beta subunits. Mg(2+) is required as a cofactor.

The catalysed reaction is succinate + ATP + CoA = succinyl-CoA + ADP + phosphate. It catalyses the reaction GTP + succinate + CoA = succinyl-CoA + GDP + phosphate. It participates in carbohydrate metabolism; tricarboxylic acid cycle; succinate from succinyl-CoA (ligase route): step 1/1. Functionally, succinyl-CoA synthetase functions in the citric acid cycle (TCA), coupling the hydrolysis of succinyl-CoA to the synthesis of either ATP or GTP and thus represents the only step of substrate-level phosphorylation in the TCA. The beta subunit provides nucleotide specificity of the enzyme and binds the substrate succinate, while the binding sites for coenzyme A and phosphate are found in the alpha subunit. The chain is Succinate--CoA ligase [ADP-forming] subunit beta from Rhodospirillum rubrum (strain ATCC 11170 / ATH 1.1.1 / DSM 467 / LMG 4362 / NCIMB 8255 / S1).